Consider the following 490-residue polypeptide: MNAGPLPEHLRRVHMVGIGGAGMSGIARILLDRGAQVSGSDAKESRGVLALRARGALVNIGHDGDALDLLPGGPTVVVTTHAAIPKTNPELVEANRRGIPVLLRPVVLADLMAGYRTLMVTGTHGKTSTTSMLIVALQHCGYDPSFAVGGELNEAGTNAHHGSGDVFVAEADESDGSLLQYRPNLIIVTNIEADHLDHFGSVEAYSAVFDEFAETLGSEGVLVVCLDDPGAAALARRAHERGIRVRGYGSADQAEAGDVPVAGQLRDWQFKDTGATAQIQLAGESAPRTMRLSVPGRHMALNALAAVVTAAEIGAAVDDVLDGLAGFEGVRRRFELVGSVESVRVFDDYAHHPTEVRTVLQAVSGIVAQQGFGRSVVVFQPHLYSRTAAFATEFADALSIADLVFVLDVYGAREAPLPGVTGALIVEQIAGAPVHYLPDLSTVAQQVAAATAPGDLVITMGAGDVTLQGKEIVRALRARANDWPPPGNGR.

Position 122-128 (122-128 (GTHGKTS)) interacts with ATP.

This sequence belongs to the MurCDEF family.

Its subcellular location is the cytoplasm. It catalyses the reaction UDP-N-acetyl-alpha-D-muramate + L-alanine + ATP = UDP-N-acetyl-alpha-D-muramoyl-L-alanine + ADP + phosphate + H(+). Its pathway is cell wall biogenesis; peptidoglycan biosynthesis. In terms of biological role, cell wall formation. This is UDP-N-acetylmuramate--L-alanine ligase from Mycobacteroides abscessus (strain ATCC 19977 / DSM 44196 / CCUG 20993 / CIP 104536 / JCM 13569 / NCTC 13031 / TMC 1543 / L948) (Mycobacterium abscessus).